The chain runs to 460 residues: Lipase member H (460 aa).

Positions 1–24 are cleaved as a signal peptide; the sequence is MLLRFYFNGLLFVGCLLSWGRSDT. N67 and N75 each carry an N-linked (GlcNAc...) asparagine glycan. S163 acts as the Nucleophile in catalysis. A glycan (N-linked (GlcNAc...) asparagine) is linked at N177. D187 acts as the Charge relay system in catalysis. A disulfide bridge connects residues C242 and C255. Residue H257 is the Charge relay system of the active site. Disulfide bonds link C279–C290 and C293–C301. N-linked (GlcNAc...) asparagine glycosylation occurs at N289. A glycan (N-linked (GlcNAc...) asparagine) is linked at N366. A disulfide bridge links C436 with C455.

Belongs to the AB hydrolase superfamily. Lipase family.

Its subcellular location is the secreted. The protein resides in the cell membrane. The catalysed reaction is 1-hexadecanoyl-2-(9Z-octadecenoyl)-sn-glycero-3-phosphate + H2O = 2-(9Z-octadecenoyl)-sn-glycero-3-phosphate + hexadecanoate + H(+). Hydrolyzes specifically phosphatidic acid (PA) to produce 2-acyl lysophosphatidic acid (LPA; a potent bioactive lipid mediator) and fatty acid. Does not hydrolyze other phospholipids, like phosphatidylserine (PS), phosphatidylcholine (PC) and phosphatidylethanolamine (PE) or triacylglycerol (TG). The sequence is that of Lipase member H (liph) from Xenopus tropicalis (Western clawed frog).